The chain runs to 285 residues: Bifunctional protein FolD 2 (285 aa).

Residues 164–166 (GRS), S189, and V230 contribute to the NADP(+) site.

It belongs to the tetrahydrofolate dehydrogenase/cyclohydrolase family. As to quaternary structure, homodimer.

It carries out the reaction (6R)-5,10-methylene-5,6,7,8-tetrahydrofolate + NADP(+) = (6R)-5,10-methenyltetrahydrofolate + NADPH. It catalyses the reaction (6R)-5,10-methenyltetrahydrofolate + H2O = (6R)-10-formyltetrahydrofolate + H(+). It functions in the pathway one-carbon metabolism; tetrahydrofolate interconversion. Functionally, catalyzes the oxidation of 5,10-methylenetetrahydrofolate to 5,10-methenyltetrahydrofolate and then the hydrolysis of 5,10-methenyltetrahydrofolate to 10-formyltetrahydrofolate. This Geobacter metallireducens (strain ATCC 53774 / DSM 7210 / GS-15) protein is Bifunctional protein FolD 2.